The following is a 177-amino-acid chain: Interleukin-7 (177 aa).

The first 25 residues, 1 to 25 (MFHVSFRYIFGLPPLILVLLPVASS), serve as a signal peptide directing secretion. Intrachain disulfides connect C27/C166, C59/C154, and C72/C117. N-linked (GlcNAc...) asparagine glycosylation is found at N95, N116, and N141.

This sequence belongs to the IL-7/IL-9 family. As to quaternary structure, interacts with IL7R and CSF2RG.

The protein resides in the secreted. Functionally, hematopoietic cytokine that plays an essential role in the development, expansion, and survival of naive and memory T-cells and B-cells thereby regulating the number of mature lymphocytes and maintaining lymphoid homeostasis. Mechanistically, exerts its biological effects through a receptor composed of IL7RA subunit and the cytokine receptor common subunit gamma/CSF2RG. Binding to the receptor leads to activation of various kinases including JAK1 or JAK3 depending on the cell type and subsequently propagation of signals through activation of several downstream signaling pathways including the PI3K/Akt/mTOR or the JAK-STAT5. The sequence is that of Interleukin-7 (IL7) from Homo sapiens (Human).